A 115-amino-acid polypeptide reads, in one-letter code: uncharacterized protein (115 aa).

The next 3 helical transmembrane spans lie at 10-30 (IAILVFLMVIGFFIFIGSFWL), 47-67 (ASGIILTIFPNINSWFNATVA), and 77-97 (VHFFIPVGFGLLFGLIIAIIV).

It localises to the cell membrane. This is an uncharacterized protein from Mycoplasma genitalium (strain ATCC 33530 / DSM 19775 / NCTC 10195 / G37) (Mycoplasmoides genitalium).